Consider the following 774-residue polypeptide: Ion-translocating oxidoreductase complex subunit C (774 aa).

2 4Fe-4S ferredoxin-type domains span residues 359 to 389 (ELPEPVPAMPCIRCGDCAQVCPVSLLPQQLH) and 399 to 428 (QLLAHNLFDCIECGACAYVCPSSIPLVQYY). [4Fe-4S] cluster-binding residues include C369, C372, C375, C379, C408, C411, C414, and C418. A compositionally biased stretch (basic and acidic residues) spans 453–490 (EQRQARLRRDEERRAAERAQRAEKAALARAAQAEREEA). The disordered stretch occupies residues 453–493 (EQRQARLRRDEERRAAERAQRAEKAALARAAQAEREEAAPA).

Belongs to the 4Fe4S bacterial-type ferredoxin family. RnfC subfamily. As to quaternary structure, the complex is composed of six subunits: RnfA, RnfB, RnfC, RnfD, RnfE and RnfG. Requires [4Fe-4S] cluster as cofactor.

It localises to the cell inner membrane. Its function is as follows. Part of a membrane-bound complex that couples electron transfer with translocation of ions across the membrane. The protein is Ion-translocating oxidoreductase complex subunit C of Pseudomonas aeruginosa (strain ATCC 15692 / DSM 22644 / CIP 104116 / JCM 14847 / LMG 12228 / 1C / PRS 101 / PAO1).